Reading from the N-terminus, the 118-residue chain is Ribonuclease P protein component (118 aa).

It belongs to the RnpA family. Consists of a catalytic RNA component (M1 or rnpB) and a protein subunit.

The enzyme catalyses Endonucleolytic cleavage of RNA, removing 5'-extranucleotides from tRNA precursor.. RNaseP catalyzes the removal of the 5'-leader sequence from pre-tRNA to produce the mature 5'-terminus. It can also cleave other RNA substrates such as 4.5S RNA. The protein component plays an auxiliary but essential role in vivo by binding to the 5'-leader sequence and broadening the substrate specificity of the ribozyme. The protein is Ribonuclease P protein component of Rickettsia felis (strain ATCC VR-1525 / URRWXCal2) (Rickettsia azadi).